The primary structure comprises 281 residues: Undecaprenyl-diphosphatase 1 (281 aa).

6 helical membrane-spanning segments follow: residues 95 to 115, 119 to 139, 152 to 172, 195 to 215, 227 to 247, and 256 to 276; these read WMVI…KDLI, FRNL…FILA, LTMK…IPGV, FSFL…LPDA, LQLL…IAWL, and FAWF…LLGT.

Belongs to the UppP family.

The protein localises to the cell membrane. It carries out the reaction di-trans,octa-cis-undecaprenyl diphosphate + H2O = di-trans,octa-cis-undecaprenyl phosphate + phosphate + H(+). In terms of biological role, catalyzes the dephosphorylation of undecaprenyl diphosphate (UPP). Confers resistance to bacitracin. The polypeptide is Undecaprenyl-diphosphatase 1 (Corynebacterium jeikeium (strain K411)).